A 97-amino-acid polypeptide reads, in one-letter code: Citrate lyase acyl carrier protein (97 aa).

At serine 14 the chain carries O-(phosphoribosyl dephospho-coenzyme A)serine.

It belongs to the CitD family. In terms of assembly, oligomer with a subunit composition of (alpha,beta,gamma)6.

The protein resides in the cytoplasm. Functionally, covalent carrier of the coenzyme of citrate lyase. This is Citrate lyase acyl carrier protein from Lactobacillus helveticus (strain DPC 4571).